We begin with the raw amino-acid sequence, 320 residues long: Malate dehydrogenase (320 aa).

Residues 10 to 15 and D34 each bind NAD(+); that span reads GAGQIG. Residues R83 and R89 each coordinate substrate. Residues N96 and 119-121 each bind NAD(+); that span reads ITN. Residues N121 and R152 each coordinate substrate. Catalysis depends on H176, which acts as the Proton acceptor.

The protein belongs to the LDH/MDH superfamily. MDH type 3 family.

The enzyme catalyses (S)-malate + NAD(+) = oxaloacetate + NADH + H(+). Functionally, catalyzes the reversible oxidation of malate to oxaloacetate. This Methylobacterium nodulans (strain LMG 21967 / CNCM I-2342 / ORS 2060) protein is Malate dehydrogenase.